The sequence spans 115 residues: Meiotically up-regulated gene 106 protein (115 aa).

The signal sequence occupies residues 1-34 (MSIKVEWIKFTRLKKCATLLVQLSLLRYRYMVLA). 2 consecutive transmembrane segments (helical) span residues 41 to 60 (CIVV…GALF) and 81 to 103 (GVKL…FTPY).

The protein resides in the membrane. Functionally, has a role in meiosis. The sequence is that of Meiotically up-regulated gene 106 protein (mug106) from Schizosaccharomyces pombe (strain 972 / ATCC 24843) (Fission yeast).